The chain runs to 454 residues: MSHNDTIVAQATPPGRGGVGILRISGLKARDVAQAVLGKLPKPRYADYLPFNDVDGTPLDQGIALWFPGPNSFTGEDVLELQGHGGPVILDLLLKRILTLPGLRIARPGEFSERAFLNDKLDLAQAEAIADLIDASSEQAARSALNSLQGAFSARVNHLVEALTHLRIYVEAAIDFPDEEIDFLSDGKIEAQLNEVMADLDAVRAEARQGSLLREGMKVVIAGRPNAGKSSLLNALAGREAAIVTDIAGTTRDVLREHIHIDGMPLHIIDTAGLRDANDEVERIGIERAWQEIAQADRVLFMVDGTTTSAVDPAEIWPDFIERLPAKLPITVVRNKADVTGEALGISEVNGHSLIRLSARTGDGVEVLRNHLKQSMGFDTNMEGGFLARRRHLQALEEAANHLQQGKAQLLGAWAGELLAEELRLAQQALSEITGEFTSDDLLGRIFSSFCIGK.

3 residues coordinate (6S)-5-formyl-5,6,7,8-tetrahydrofolate: arginine 23, glutamate 80, and lysine 120. The TrmE-type G domain occupies 216-377 (GMKVVIAGRP…LRNHLKQSMG (162 aa)). Asparagine 226 serves as a coordination point for K(+). Residues 226 to 231 (NAGKSS), 245 to 251 (TDIAGTT), 270 to 273 (DTAG), 335 to 338 (NKAD), and 358 to 360 (SAR) contribute to the GTP site. Mg(2+) is bound at residue serine 230. 3 residues coordinate K(+): threonine 245, isoleucine 247, and threonine 250. Position 251 (threonine 251) interacts with Mg(2+). Lysine 454 is a binding site for (6S)-5-formyl-5,6,7,8-tetrahydrofolate.

Belongs to the TRAFAC class TrmE-Era-EngA-EngB-Septin-like GTPase superfamily. TrmE GTPase family. Homodimer. Heterotetramer of two MnmE and two MnmG subunits. The cofactor is K(+).

It localises to the cytoplasm. Functionally, exhibits a very high intrinsic GTPase hydrolysis rate. Involved in the addition of a carboxymethylaminomethyl (cmnm) group at the wobble position (U34) of certain tRNAs, forming tRNA-cmnm(5)s(2)U34. The protein is tRNA modification GTPase MnmE of Klebsiella pneumoniae subsp. pneumoniae (strain ATCC 700721 / MGH 78578).